Consider the following 1131-residue polypeptide: Phytochrome (1131 aa).

The tract at residues 1–30 (MASNSRHTQSQSTGSNNRRSSTNTNTTTNK) is disordered. The span at 9–29 (QSQSTGSNNRRSSTNTNTTTN) shows a compositional bias: low complexity. In terms of domain architecture, GAF spans 227–406 (DVGLLCDTVV…ALGLQLNMEL (180 aa)). C332 lines the phytochromobilin pocket. 2 consecutive PAS domains span residues 621–692 (VASE…LRGE) and 755–826 (DYRS…TIVL). The region spanning 903–1123 (YIRQEIKNPL…LVNVEFPMAQ (221 aa)) is the Histidine kinase domain.

This sequence belongs to the phytochrome family. Homodimer. Post-translationally, contains one covalently linked phytochromobilin chromophore.

Its function is as follows. Regulatory photoreceptor which exists in two forms that are reversibly interconvertible by light: the Pr form that absorbs maximally in the red region of the spectrum and the Pfr form that absorbs maximally in the far-red region. Photoconversion of Pr to Pfr induces an array of morphogenic responses, whereas reconversion of Pfr to Pr cancels the induction of those responses. Pfr controls the expression of a number of nuclear genes including those encoding the small subunit of ribulose-bisphosphate carboxylase, chlorophyll A/B binding protein, protochlorophyllide reductase, rRNA, etc. It also controls the expression of its own gene(s) in a negative feedback fashion. This is Phytochrome from Pinus sylvestris (Scotch pine).